The chain runs to 299 residues: Protein tantalus (299 aa).

The disordered stretch occupies residues 16-100; the sequence is KDNRSPTTNS…RSSTFGARAG (85 aa). Positions 20–35 are enriched in polar residues; it reads SPTTNSNLSWQLNQMA. The segment covering 53–69 has biased composition (acidic residues); the sequence is ESDDNVSSESHDSDDVD. Over residues 84–93 the composition is skewed to low complexity; it reads CISGSSRRSS. Phosphoserine is present on residues Ser-204 and Ser-264.

Binds to DNA in vitro. Interacts directly with Asx. As to expression, ubiquitously expressed in precellularized embryos. Then it decreases at cellular blastoderm to increase again during germ band extension. During germ band extension, it is highly expressed in somatic and visceral mesoderm. Ubiquitously expressed in imaginal disks. In ovary, it is expressed from stage 10.

The protein resides in the nucleus. Its subcellular location is the cytoplasm. It localises to the chromosome. Its function is as follows. Potential cofactor involved in sensory organ development. Despite its interaction with the Polycomb group protein Asx, it does not regulate the expression of homeotic genes. In Drosophila melanogaster (Fruit fly), this protein is Protein tantalus.